The sequence spans 667 residues: UvrABC system protein B (667 aa).

The Helicase ATP-binding domain maps to 25–180 (DSLQNQHRFQ…LLRALVSVQY (156 aa)). An ATP-binding site is contributed by 38-45 (GATGTGKT). The Beta-hairpin motif lies at 91–114 (YYDYYQPEAYIPVSDTYIEKSSSI). The 167-residue stretch at 429 to 595 (QVDDLLGEIK…PIVKRSSNSI (167 aa)) folds into the Helicase C-terminal domain. Positions 626–661 (PELIQQLEAQMKEAAKNLEFESAAKYRDRIKQLRDK) constitute a UVR domain.

The protein belongs to the UvrB family. In terms of assembly, forms a heterotetramer with UvrA during the search for lesions. Interacts with UvrC in an incision complex.

Its subcellular location is the cytoplasm. In terms of biological role, the UvrABC repair system catalyzes the recognition and processing of DNA lesions. A damage recognition complex composed of 2 UvrA and 2 UvrB subunits scans DNA for abnormalities. Upon binding of the UvrA(2)B(2) complex to a putative damaged site, the DNA wraps around one UvrB monomer. DNA wrap is dependent on ATP binding by UvrB and probably causes local melting of the DNA helix, facilitating insertion of UvrB beta-hairpin between the DNA strands. Then UvrB probes one DNA strand for the presence of a lesion. If a lesion is found the UvrA subunits dissociate and the UvrB-DNA preincision complex is formed. This complex is subsequently bound by UvrC and the second UvrB is released. If no lesion is found, the DNA wraps around the other UvrB subunit that will check the other stand for damage. In Microcystis aeruginosa (strain NIES-843 / IAM M-2473), this protein is UvrABC system protein B.